The chain runs to 175 residues: MRYCRLGVSSMRPKLKVRGQYIKDLSFENPNSPKVFLMISKSPPEISISVNVSSASLPVKPTEGEQAAADLYEVTLQVNIESVVEKVPAFLCELKYCGVFSLEEKAEEQVVKEALLITAPGVLFPFVREVIAKMTASAGFPPLMLDVIDFEAMYASQLGGDDGKNKQANKSGGAA.

This sequence belongs to the SecB family. In terms of assembly, homotetramer, a dimer of dimers. One homotetramer interacts with 1 SecA dimer.

The protein localises to the cytoplasm. Functionally, one of the proteins required for the normal export of preproteins out of the cell cytoplasm. It is a molecular chaperone that binds to a subset of precursor proteins, maintaining them in a translocation-competent state. It also specifically binds to its receptor SecA. In Anaplasma marginale (strain Florida), this protein is Protein-export protein SecB.